Reading from the N-terminus, the 213-residue chain is U1 small nuclear ribonucleoprotein C (213 aa).

Residues 4–36 form a Matrin-type zinc finger; that stretch reads YYCDYCDTYLTHDSPSVRKQHNAGYKHKANVRS. Residues 143 to 166 are compositionally biased toward pro residues; the sequence is APSMPMPPLNSLPRPPTMNVPPAV. The disordered stretch occupies residues 143–213; that stretch reads APSMPMPPLN…INAQGPEANH (71 aa). Over residues 167-180 the composition is skewed to low complexity; sequence PGSTSTPTSGGAPS.

Belongs to the U1 small nuclear ribonucleoprotein C family. In terms of assembly, U1 snRNP is composed of the 7 core Sm proteins B/B', D1, D2, D3, E, F and G that assemble in a heptameric protein ring on the Sm site of the small nuclear RNA to form the core snRNP, and at least 3 U1 snRNP-specific proteins U1-70K, U1-A and U1-C. U1-C interacts with U1 snRNA and the 5' splice-site region of the pre-mRNA.

It is found in the nucleus. In terms of biological role, component of the spliceosomal U1 snRNP, which is essential for recognition of the pre-mRNA 5' splice-site and the subsequent assembly of the spliceosome. U1-C is directly involved in initial 5' splice-site recognition for both constitutive and regulated alternative splicing. The interaction with the 5' splice-site seems to precede base-pairing between the pre-mRNA and the U1 snRNA. Stimulates commitment or early (E) complex formation by stabilizing the base pairing of the 5' end of the U1 snRNA and the 5' splice-site region. In Vitis vinifera (Grape), this protein is U1 small nuclear ribonucleoprotein C.